Consider the following 144-residue polypeptide: Deoxyuridine 5'-triphosphate nucleotidohydrolase (144 aa).

8 residues coordinate dUMP: Ser-66, Gly-79, Asp-82, Tyr-85, Lys-90, Arg-134, Phe-139, and Gly-140.

This sequence belongs to the dUTPase family. In terms of assembly, homotrimer. Mg(2+) serves as cofactor.

The enzyme catalyses dUTP + H2O = dUMP + diphosphate + H(+). Its pathway is pyrimidine metabolism; dUMP biosynthesis; dUMP from dCTP (dUTP route): step 2/2. Involved in nucleotide metabolism via production of dUMP, the immediate precursor of thymidine nucleotides, and decreases the intracellular concentration of dUTP so that uracil cannot be incorporated into DNA. This is Deoxyuridine 5'-triphosphate nucleotidohydrolase (DUT1) from Candida glabrata (strain ATCC 2001 / BCRC 20586 / JCM 3761 / NBRC 0622 / NRRL Y-65 / CBS 138) (Yeast).